Consider the following 257-residue polypeptide: tRNA pseudouridine synthase A (257 aa).

Catalysis depends on aspartate 53, which acts as the Nucleophile. Tyrosine 111 serves as a coordination point for substrate.

The protein belongs to the tRNA pseudouridine synthase TruA family. As to quaternary structure, homodimer.

The enzyme catalyses uridine(38/39/40) in tRNA = pseudouridine(38/39/40) in tRNA. In terms of biological role, formation of pseudouridine at positions 38, 39 and 40 in the anticodon stem and loop of transfer RNAs. This Xylella fastidiosa (strain M23) protein is tRNA pseudouridine synthase A.